The primary structure comprises 535 residues: Glucose-6-phosphate isomerase (535 aa).

Glutamate 359 acts as the Proton donor in catalysis. Active-site residues include histidine 390 and lysine 505.

It belongs to the GPI family.

Its subcellular location is the cytoplasm. It carries out the reaction alpha-D-glucose 6-phosphate = beta-D-fructose 6-phosphate. Its pathway is carbohydrate biosynthesis; gluconeogenesis. The protein operates within carbohydrate degradation; glycolysis; D-glyceraldehyde 3-phosphate and glycerone phosphate from D-glucose: step 2/4. Catalyzes the reversible isomerization of glucose-6-phosphate to fructose-6-phosphate. This Treponema pallidum (strain Nichols) protein is Glucose-6-phosphate isomerase.